The primary structure comprises 358 residues: Heavy metal-associated isoprenylated plant protein 37 (358 aa).

The 64-residue stretch at 12–75 (IQTFSLRVNI…KLVKAGKHAE (64 aa)) folds into the HMA domain. A metal cation is bound by residues Cys23 and Cys26. Disordered regions lie at residues 100-194 (QKGQ…QNTQ) and 332-358 (QQQS…CNIM). A compositionally biased stretch (acidic residues) spans 128–141 (AEEDGDGSEEEDGD). The segment covering 148–181 (ANQQQQQNVVNAKKNSGGAAMNNGNNGVNAASKK) has biased composition (low complexity). 2 stretches are compositionally biased toward polar residues: residues 184–194 (QKQSNHNQNTQ) and 339–358 (HATN…CNIM). Cys355 is subject to Cysteine methyl ester. Cys355 is lipidated: S-farnesyl cysteine. The propeptide at 356–358 (NIM) is removed in mature form.

Belongs to the HIPP family.

Functionally, heavy-metal-binding protein. This chain is Heavy metal-associated isoprenylated plant protein 37, found in Arabidopsis thaliana (Mouse-ear cress).